Consider the following 156-residue polypeptide: Putative pre-16S rRNA nuclease (156 aa).

It belongs to the YqgF nuclease family.

It is found in the cytoplasm. In terms of biological role, could be a nuclease involved in processing of the 5'-end of pre-16S rRNA. The sequence is that of Putative pre-16S rRNA nuclease from Phenylobacterium zucineum (strain HLK1).